An 847-amino-acid chain; its full sequence is KN motif and ankyrin repeat domain-containing protein 2 (847 aa).

The disordered stretch occupies residues 1–32 (MAQVLHVPAPFPGTPGQASSAAFPNKEPDPPY). The interaction with AIFM1 stretch occupies residues 1–72 (MAQVLHVPAP…PVQRRPRLGS (72 aa)). 5 positions are modified to phosphoserine: S19, S83, S86, S89, and S92. Position 105 is an omega-N-methylarginine (R105). A disordered region spans residues 161-182 (LAGVGLLPPTPRSSGLSTPVAP). T170 carries the post-translational modification Phosphothreonine. Coiled-coil stretches lie at residues 187–207 (LAHV…LEEQ) and 284–311 (EAAL…AQTQ). At T331 the chain carries Phosphothreonine. S358 is modified (phosphoserine). Disordered regions lie at residues 414-473 (GAAR…GGAS) and 502-581 (NGGY…PEEE). Over residues 420–433 (DPPPSPAEPSPSSP) the composition is skewed to pro residues. Low complexity-rich tracts occupy residues 434–446 (YPAA…APAA) and 506–516 (ESSSEDSSTAE). At S536 the chain carries Phosphoserine. The stretch at 610–647 (RELKVAYTTVLQEWLRLACRSDAHPELVRRHLVTFRAM) is one ANK 0; degenerate repeat. 5 ANK repeats span residues 662 to 692 (NGNT…QVDK), 696 to 729 (AGYS…NVNA), 734 to 763 (AGQT…DVNM), 767 to 797 (DGST…DISL), and 801 to 831 (DGST…KCSF). Residues 665–831 (TALHYSVSHA…YSRMNIKCSF (167 aa)) form an interaction with NCOA1 region.

Interacts (non-phosphorylated form) with NCOA1; NCOA2 AND NCOA3. Interacts with AIFM1. Interacts with ARHGDIA; the interaction is direct and may regulate the interaction of ARHGDIA with RHOA, RAC1 and CDC42. Interacts (via ANK repeats 1-5) with KIF21A. In terms of processing, phosphorylated by casein kinase II upon estrogen stimulation. Phosphorylation induces the release by KANK2 of NCOA1 and its translocation to the nucleus where NCOA1 can activate gene transcription. Expressed by podocytes in kidney glomeruli (at protein level).

It is found in the cytoplasm. It localises to the mitochondrion. Functionally, involved in transcription regulation by sequestering in the cytoplasm nuclear receptor coactivators such as NCOA1, NCOA2 and NCOA3. Involved in regulation of caspase-independent apoptosis by sequestering the proapoptotic factor AIFM1 in mitochondria. Pro-apoptotic stimuli can induce its proteasomal degradation allowing the translocation of AIFM1 to the nucleus to induce apoptosis. Involved in the negative control of vitamin D receptor signaling pathway. Involved in actin stress fibers formation through its interaction with ARHGDIA and the regulation of the Rho signaling pathway. May thereby play a role in cell adhesion and migration, regulating for instance podocytes migration during development of the kidney. Through the Rho signaling pathway may also regulate cell proliferation. The sequence is that of KN motif and ankyrin repeat domain-containing protein 2 from Rattus norvegicus (Rat).